The sequence spans 309 residues: Short-chain dehydrogenase/reductase ARMGADRAFT_1018437 (309 aa).

Residues lysine 64, aspartate 86, and asparagine 113 each contribute to the NADP(+) site. Serine 167 serves as the catalytic Proton donor. Tyrosine 196 and lysine 200 together coordinate NADP(+). The Proton acceptor role is filled by tyrosine 196. The active-site Lowers pKa of active site Tyr is the lysine 200.

Belongs to the short-chain dehydrogenases/reductases (SDR) family.

It participates in secondary metabolite biosynthesis. Short-chain dehydrogenase/reductase, part of the gene cluster that mediates the biosynthesis of melleolides, a range of antifungal and phytotoxic polyketide derivatives composed of an orsellinic acid (OA) moiety esterified to various sesquiterpene alcohols. The first step in melleolides biosynthesis is performed by the delta(6)-protoilludene synthase PRO1 which catalyzes the cyclization of farnesyl diphosphate to protoilludene. The orsellinic acid synthase armB produces OA by condensing acetyl-CoA with 3 malonyl-CoA units in a three-round chain elongation reaction folowed by a C2-C7 ring closure. ArmB further catalyzes the trans-esterification of OA to the various sesquiterpene alcohols resulting from the hydroxylation of protoilludene. The melleolides cluster also includes 5 cytochrome P450 monooxygenases, 4 NAD(+)-dependent oxidoreductases, one flavin-dependent oxidoreductase, and one O-methyltransferase. The cytochrome P450 monooxygenases may be involved in protoilludene hydroxylation to elaborate melleolides with multiple alcohol groups, such as melleolide D, which carries alcohol functionalities at C-4, C-5, C-10, and C-13. The role of the NAD(+)-dependent enzymes remains unknown. Numerous melleolides, including arnamial, show 5'-O-methylation of the aromatic moiety which may be catalyzed by the methyltransferase encoded in the cluster. The flavin-dependent oxidoreductase might represent the dehydrogenase yielding the aldehyde in position 1 of arnamial and other melleolides. Finally, several halogenase localized outside of the cluster, are able to catalyze the transfer of a single chlorine atom to the melleolide backbone, resulting in a 6'-chloromelleolide product. This Armillaria gallica (Bulbous honey fungus) protein is Short-chain dehydrogenase/reductase ARMGADRAFT_1018437.